The following is a 494-amino-acid chain: Hexokinase-2 (494 aa).

In terms of domain architecture, Hexokinase spans 32–483 (GRADAVLREL…SGIGAALLAA (452 aa)). The tract at residues 87–225 (SGEEKGVFYA…GLDMKVTALI (139 aa)) is hexokinase small subdomain. G101, T102, and N103 together coordinate ADP. D-glucose contacts are provided by T191, K192, N226, and D227. Residues 226–472 (NDTIGTLAGG…STIVIKLAKD (247 aa)) form a hexokinase large subdomain region. Residue T250 coordinates ADP. D-glucose is bound by residues N253, E281, and E312. G437 lines the ADP pocket.

The protein belongs to the hexokinase family. Expressed in roots, leaves, flowers, immature seeds, endosperm and seed coat.

The enzyme catalyses a D-hexose + ATP = a D-hexose 6-phosphate + ADP + H(+). It catalyses the reaction D-fructose + ATP = D-fructose 6-phosphate + ADP + H(+). The catalysed reaction is D-glucose + ATP = D-glucose 6-phosphate + ADP + H(+). The protein operates within carbohydrate metabolism; hexose metabolism. It functions in the pathway carbohydrate degradation; glycolysis; D-glyceraldehyde 3-phosphate and glycerone phosphate from D-glucose: step 1/4. Functionally, fructose and glucose phosphorylating enzyme. This Oryza sativa subsp. japonica (Rice) protein is Hexokinase-2 (HXK2).